Consider the following 354-residue polypeptide: Lysine racemase (354 aa).

Lys36 carries the post-translational modification N6-(pyridoxal phosphate)lysine.

This sequence belongs to the alanine racemase family. As to quaternary structure, homodimer. It depends on pyridoxal 5'-phosphate as a cofactor.

The catalysed reaction is L-lysine = D-lysine. It carries out the reaction L-ornithine = D-ornithine. It functions in the pathway cell wall biogenesis; peptidoglycan biosynthesis. Its function is as follows. Catalyzes the interconversion of D-lysine and L-lysine. Has also high activity toward ornithine, and weaker activity toward alanine. Contributes to production of D-lysine and D-alanine for use as peptidoglycan components. This chain is Lysine racemase, found in Thermotoga maritima (strain ATCC 43589 / DSM 3109 / JCM 10099 / NBRC 100826 / MSB8).